A 769-amino-acid polypeptide reads, in one-letter code: Serine protease HtrA-like (769 aa).

Residues 1–20 show a composition bias toward basic residues; that stretch reads MDIGKKHVIPKSQYRRKRRE. The segment at 1-390 is disordered; sequence MDIGKKHVIP…ATSKLNKGRA (390 aa). Basic and acidic residues-rich tracts occupy residues 21–64 and 71–108; these read FFHN…ERFK and LEQR…DVSK. Residues 126-137 are compositionally biased toward polar residues; the sequence is YEQNSEATLSTK. The span at 138–186 shows a compositional bias: basic and acidic residues; the sequence is STDKVESTDMRKLSSDKNKVGHEEQHVLSKPSEHDKETRIDFESSRTDS. Polar residues predominate over residues 247–262; it reads QQSQNEQTKTYTYGDS. Composition is skewed to basic and acidic residues over residues 264–296 and 310–330; these read QNDK…HIVD and KTDD…HKQN. Residues 331 to 347 show a composition bias toward polar residues; it reads ADSSETVGYQSQSSASH. A compositionally biased stretch (basic and acidic residues) spans 348 to 364; it reads RITEKRNNAINDHDKLN. Positions 366–390 are enriched in polar residues; it reads QKPNAKTSANNNQKKATSKLNKGRA. Residues 410–430 form a helical membrane-spanning segment; it reads LVILMGIIILIVILNAIFNNV. Active-site charge relay system residues include H504, D534, and S619. One can recognise a PDZ domain in the interval 680 to 733; the sequence is IASLNSFERQAVKLPGKVKNGVVVDQVDNNGLADQSGLKKGDVITELDGKLLED.

The protein belongs to the peptidase S1C family.

Its subcellular location is the cell membrane. The protein is Serine protease HtrA-like of Staphylococcus aureus (strain MSSA476).